A 66-amino-acid chain; its full sequence is MAAGKDVRVTVILECTSCAKNGANKKSPGVSRYITEKNRHNTPGRLELIKFCPYCYKHTIHGEIKK.

This sequence belongs to the bacterial ribosomal protein bL33 family.

It is found in the plastid. The protein localises to the chloroplast. The chain is Large ribosomal subunit protein bL33c from Illicium oligandrum (Star anise).